We begin with the raw amino-acid sequence, 248 residues long: MGYNKSLRYSRHEGTTCVIDNHHLKSLGSVLHDVRRKKDRIREAEYEPIIDLADQYMVTEDPFRGPGKNVRITLFKEIRRVQPDTMKLVCNWSGKEFLRETWTRFISEEFPITTDQEIMDLWFELQLRPMHPNRCYKFTMQYALCTHPDYIAHDVIRQQDPYFVGPNNIERINLTKKGFAFPLTCLQSVYNDNFEGFFEDVLWPYFHRPLVYVGTTSGEIEEIMIEVSLLFKIKEFAPDVPLFTGPAY.

It belongs to the polyhedrin family.

In terms of biological role, component of the virus occlusion bodies, which are large proteinaceous structures, that protect the virus from the outside environment for extended periods until they are ingested by insect larvae. The sequence is that of Granulin from Zygaenidae (burnets).